We begin with the raw amino-acid sequence, 224 residues long: Claudin-19 (224 aa).

Residues 1-7 (MANSGLQ) lie on the Cytoplasmic side of the membrane. A helical transmembrane segment spans residues 8 to 28 (LLGYFLALGGWVGIIASTALP). Topologically, residues 29-81 (QWKQSSYAGDAIITAVGLYEGLWMSCASQSTGQVQCKLYDSLLALDGHIQSAR) are extracellular. A disulfide bridge links C54 with C64. Residues 82 to 102 (ALMVVAVLLGFVAMVLSVVGM) form a helical membrane-spanning segment. Topologically, residues 103-117 (KCTRVGDSNPTAKSR) are cytoplasmic. The helical transmembrane segment at 118 to 138 (VAISGGALFLLAGLCTLTAVS) threads the bilayer. Residues 139–160 (WYATLVTQEFFNPSTPVNARYE) lie on the Extracellular side of the membrane. The helical transmembrane segment at 161–181 (FGPALFVGWASAGLAMLGGSF) threads the bilayer. Residues 182 to 224 (LCCTCPEPERANSIPQPYRSGPSTAAREPVVKLPASVKGPLGV) lie on the Cytoplasmic side of the membrane.

It belongs to the claudin family. In terms of assembly, can form homo- and heteropolymeric tight junction strands. Interacts with other claudins including CLDN3, CLDN10, CLDN16 and CLDN18 with highest affinity for CLDN16. Interacts (via PDZ-binding motif TRV) with TJP1 (via PDZ domain). As to quaternary structure, (Microbial infection) Interacts (via both extracellular domains) with Clostridium perfringens enterotoxin CPE; the interaction disrupts claudin assembly in tight junctions. As to expression, expressed in the corticomedullary axis of the TAL, specifically in the cortex and the outer stripe of outer medulla (OSOM) zone (at protein level). Expressed in peripheral nervous system, in Schwan cells (at protein level).

The protein resides in the cell junction. Its subcellular location is the tight junction. It localises to the cell membrane. It carries out the reaction Mg(2+)(in) = Mg(2+)(out). The catalysed reaction is Ca(2+)(in) = Ca(2+)(out). It catalyses the reaction Na(+)(in) = Na(+)(out). The enzyme catalyses K(+)(in) = K(+)(out). It carries out the reaction Rb(+)(in) = Rb(+)(out). The catalysed reaction is Cs(+)(in) = Cs(+)(out). It catalyses the reaction Li(+)(in) = Li(+)(out). Its function is as follows. Forms paracellular channels: coassembles with CLDN16 into tight junction strands with cation-selective channels through the strands, conveying epithelial permeability in a process known as paracellular tight junction permeability. Involved in the maintenance of ion gradients along the nephron. In the thick ascending limb (TAL) of Henle's loop, facilitates sodium paracellular permeability from the interstitial compartment to the lumen, contributing to the lumen-positive transepithelial potential that drives paracellular magnesium and calcium reabsorption. Forms paracellular barriers on its own. In the peripheral nervous system, represents a major constituent of the tight junctions in Schwann cells and contributes to electrical sealing. During retinal neurogenesis, may regulate the barrier properties of tight junctions in retinal pigment epithelium, required for proper retinal tissue differentiation and vision. The chain is Claudin-19 from Mus musculus (Mouse).